The following is a 347-amino-acid chain: 5-deoxyribose 1-phosphate isomerase (347 aa).

Residues 48–50, R91, and Q198 contribute to the substrate site; that span reads RGA. D239 acts as the Proton donor in catalysis. 249 to 250 lines the substrate pocket; sequence NK.

The protein belongs to the EIF-2B alpha/beta/delta subunits family. DrdI subfamily.

It catalyses the reaction 5-deoxy-alpha-D-ribose 1-phosphate = 5-deoxy-D-ribulose 1-phosphate. Its pathway is carbohydrate degradation. Functionally, catalyzes the isomerization of 5-deoxy-alpha-D-ribose 1-phosphate to 5-deoxy-D-ribulose 1-phosphate, as part of a 5-deoxyribose salvage pathway that recycles this toxic radical SAM enzyme by-product to mainstream metabolites. This chain is 5-deoxyribose 1-phosphate isomerase, found in Petrotoga mobilis (strain DSM 10674 / SJ95).